Reading from the N-terminus, the 707-residue chain is Serine/threonine protein kinase UL97 (707 aa).

Low complexity predominate over residues 1-14; sequence MSSALRSRARSASL. Disordered stretches follow at residues 1–33, 113–146, 176–198, and 231–264; these read MSSALRSRARSASLGTTTQGWDPPPLRRPSRAR, DGEKEDAASDKENLRRPVVPSTSSRGSAASGDGY, FTGGSDPSDSVSGVRGGRKRPLR, and ESQDSAVASGPGRIPQPLSGSSGEESATAVEADS. Positions 113–127 are enriched in basic and acidic residues; that stretch reads DGEKEDAASDKENLR. Residues 178–188 are compositionally biased toward low complexity; sequence GGSDPSDSVSG. ATP contacts are provided by residues 337–345 and lysine 359; that span reads LGQGSFGEV. Aspartate 456 serves as the catalytic Proton acceptor.

This sequence belongs to the protein kinase superfamily. Tyr protein kinase family. HCMV ganciclovir subfamily. Interacts with UL83. Post-translationally, autophosphorylates on serine and threonine residues.

Its subcellular location is the virion. The enzyme catalyses L-seryl-[protein] + ATP = O-phospho-L-seryl-[protein] + ADP + H(+). It carries out the reaction L-threonyl-[protein] + ATP = O-phospho-L-threonyl-[protein] + ADP + H(+). Functionally, serine/threonine protein kinase that plays important roles in several processes including nuclear viral egress, viral replication or regulation of host cell cycle progression. Participates in the acquisition of tegument during virion morphogenesis in the nucleus. Phosphorylates the viral nuclear egress complex (NEC) subunits UL50 and UL53. Redistributes the host nuclear lamina by phosphorylating cellular Lamins-A/C. Plays a role in viral DNA synthesis by phosphorylating the DNA polymerase processivity factor UL44. Stimulates host cell cycle to support viral DNA synthesis by phosphorylating host retinoblastoma/RB1 protein. Additional substrates have been identified including host EF1D or H2B. Also phosphorylates host SAMHD1 and thereby counteracts its antiviral effect by reducing its dNTP hydrolase activity. This Human cytomegalovirus (strain AD169) (HHV-5) protein is Serine/threonine protein kinase UL97 (UL97).